A 228-amino-acid chain; its full sequence is Ribonuclease S-4 (228 aa).

Positions 1 to 27 are cleaved as a signal peptide; it reads MGITGMTYMFTMVLSLIVLIFSASTVG. Q36 is an RNA binding site. C42 and C49 are oxidised to a cystine. Position 60 (H60) interacts with RNA. H60 functions as the Proton donor in the catalytic mechanism. A disulfide bond links C75 and C119. N-linked (GlcNAc) asparagine glycosylation is present at N87. 98-99 contributes to the RNA binding site; that stretch reads NV. An N-linked (GlcNAc...) asparagine glycan is attached at N101. Residues F108, 111-112, and 115-116 contribute to the RNA site; these read RE and KH. E112 is an active-site residue. H116 acts as the Proton acceptor in catalysis. N144, N160, and N175 each carry an N-linked (GlcNAc...) asparagine glycan. 2 disulfides stabilise this stretch: C183–C222 and C199–C210.

It belongs to the RNase T2 family. Post-translationally, the N-glycans attached at Asn-101, Asn-160 and Asn-175 consist predominantly of disaccharide (GlcNAc-GlcNAc). The N-glycan at 87 is 53% monosaccharide and 47% disaccharide. The N-glycan at Asn-144 contains mannose and xylose.

The protein localises to the secreted. It is found in the extracellular space. It catalyses the reaction a ribonucleotidyl-ribonucleotide-RNA + H2O = a 3'-end 3'-phospho-ribonucleotide-RNA + a 5'-end dephospho-ribonucleoside-RNA + H(+). Self-incompatibility (SI) is the inherited ability of a flowering plant to prevent self-fertilization by discriminating between self and non-self pollen during pollination. In many species, self-incompatibility is controlled by the single, multiallelic locus S. This is Ribonuclease S-4 from Pyrus pyrifolia (Chinese pear).